Here is a 191-residue protein sequence, read N- to C-terminus: MEDQKQTPSNQTATPAGDEATSTAAASPETGAPDTAAAAVDDVAAQLAALEAKASEHYDLYMRAVAEGENIRRRAQEDVAKAHKFAIENFADNLLPVMDSLQAALADGSGDIAKLREGVELTARQLAAAFERGKIVELNPVGEKFDPHRHQAISMVPADQEPNTVVTVLQRGYTIADRVLRPALVTVAAPK.

Over residues 1 to 14 (MEDQKQTPSNQTAT) the composition is skewed to polar residues. The segment at 1-35 (MEDQKQTPSNQTATPAGDEATSTAAASPETGAPDT) is disordered. Positions 19 to 35 (EATSTAAASPETGAPDT) are enriched in low complexity.

Belongs to the GrpE family. Homodimer.

The protein localises to the cytoplasm. Participates actively in the response to hyperosmotic and heat shock by preventing the aggregation of stress-denatured proteins, in association with DnaK and GrpE. It is the nucleotide exchange factor for DnaK and may function as a thermosensor. Unfolded proteins bind initially to DnaJ; upon interaction with the DnaJ-bound protein, DnaK hydrolyzes its bound ATP, resulting in the formation of a stable complex. GrpE releases ADP from DnaK; ATP binding to DnaK triggers the release of the substrate protein, thus completing the reaction cycle. Several rounds of ATP-dependent interactions between DnaJ, DnaK and GrpE are required for fully efficient folding. The sequence is that of Protein GrpE from Cupriavidus taiwanensis (strain DSM 17343 / BCRC 17206 / CCUG 44338 / CIP 107171 / LMG 19424 / R1) (Ralstonia taiwanensis (strain LMG 19424)).